The primary structure comprises 401 residues: MIIHPKTRGFICTTTHPVGCEYNVLEQIQSTRARGVRSNGPKKVLVIGASSGYGLATRISAAFGFGADTLGVFFEKPGTEKKPGTAGWYNAAAFDKSAKNAGLYSRSINGDAFSDEMRAKVIEIIKSEMGGHVDLVVYSLASPLRKMPSTGEIKRSVLKPIGVAHISNAIDTNKDQIIQATVEPATEQEIADTVAVMGGQDWELWINALTQADVLAPQTRTVAFSYIGTEITWPIYWHGALGKAKADLDATSRRLDARLQALGGGANVAVLKSVVTQASAAIPALPLYIAIVFKVMKEKGLHEGTIEQADRLLRERLYREDGQPAAVDEEHRLRLDDWELREDVQATCKVIWKQVTNENLFQLTDYANYKRDFLKLFGFERADVDYDADVNPEVTFDVIEL.

NAD(+)-binding positions include 48-53 (GASSGY), 74-75 (FE), 111-112 (DA), and 140-141 (LA). Tyrosine 226 contributes to the substrate binding site. Catalysis depends on tyrosine 236, which acts as the Proton donor. Residues lysine 245 and 274–276 (VVT) each bind NAD(+).

Belongs to the TER reductase family. As to quaternary structure, monomer.

The catalysed reaction is a 2,3-saturated acyl-[ACP] + NAD(+) = a (2E)-enoyl-[ACP] + NADH + H(+). The protein operates within lipid metabolism; fatty acid biosynthesis. Involved in the final reduction of the elongation cycle of fatty acid synthesis (FAS II). Catalyzes the reduction of a carbon-carbon double bond in an enoyl moiety that is covalently linked to an acyl carrier protein (ACP). The protein is Enoyl-[acyl-carrier-protein] reductase [NADH] of Xylella fastidiosa (strain 9a5c).